A 36-amino-acid polypeptide reads, in one-letter code: Delta-amaurobitoxin-Pl1c (36 aa).

4 cysteine pairs are disulfide-bonded: cysteine 3/cysteine 19, cysteine 10/cysteine 24, cysteine 18/cysteine 34, and cysteine 26/cysteine 32.

As to expression, expressed by the venom gland.

The protein localises to the secreted. Functionally, binds at site 4 of sodium channels (Nav) and inhibits the fast inactivation of cockroach channels. This toxin is active only on insects. Has a potent activity against S.litura larvae. The sequence is that of Delta-amaurobitoxin-Pl1c from Pireneitega luctuosa (Tangled nest spider).